The following is a 154-amino-acid chain: Endoribonuclease YbeY (154 aa).

Histidine 114, histidine 118, and histidine 124 together coordinate Zn(2+).

Belongs to the endoribonuclease YbeY family. Requires Zn(2+) as cofactor.

It localises to the cytoplasm. Functionally, single strand-specific metallo-endoribonuclease involved in late-stage 70S ribosome quality control and in maturation of the 3' terminus of the 16S rRNA. The sequence is that of Endoribonuclease YbeY from Haemophilus influenzae (strain 86-028NP).